The following is a 341-amino-acid chain: General L-amino acid-binding periplasmic protein AapJ (341 aa).

Positions 1-23 (MKNKLLSAAIGAAVLAVGASAAS) are cleaved as a signal peptide.

Belongs to the bacterial solute-binding protein 3 family. As to quaternary structure, the complex is composed of two ATP-binding proteins (AapP), two transmembrane proteins (AapM and AapQ) and a solute-binding protein (AapJ).

It is found in the periplasm. Part of the ABC transporter complex AapJQMP involved in uptake of L-amino acids. Affects the efflux of these amino acids as well. Essential for the development of bacteroids, the differentiated legume-symbiotic forms of this bacterium, and for the effective N(2) fixation by them. In Rhizobium johnstonii (strain DSM 114642 / LMG 32736 / 3841) (Rhizobium leguminosarum bv. viciae), this protein is General L-amino acid-binding periplasmic protein AapJ (aapJ).